The chain runs to 158 residues: NAD(P)H-quinone oxidoreductase subunit J, chloroplastic (158 aa).

It belongs to the complex I 30 kDa subunit family. As to quaternary structure, NDH is composed of at least 16 different subunits, 5 of which are encoded in the nucleus.

The protein resides in the plastid. Its subcellular location is the chloroplast thylakoid membrane. It carries out the reaction a plastoquinone + NADH + (n+1) H(+)(in) = a plastoquinol + NAD(+) + n H(+)(out). It catalyses the reaction a plastoquinone + NADPH + (n+1) H(+)(in) = a plastoquinol + NADP(+) + n H(+)(out). In terms of biological role, NDH shuttles electrons from NAD(P)H:plastoquinone, via FMN and iron-sulfur (Fe-S) centers, to quinones in the photosynthetic chain and possibly in a chloroplast respiratory chain. The immediate electron acceptor for the enzyme in this species is believed to be plastoquinone. Couples the redox reaction to proton translocation, and thus conserves the redox energy in a proton gradient. The sequence is that of NAD(P)H-quinone oxidoreductase subunit J, chloroplastic from Spinacia oleracea (Spinach).